A 574-amino-acid chain; its full sequence is DNA mismatch repair protein MutL (574 aa).

Belongs to the DNA mismatch repair MutL/HexB family.

This protein is involved in the repair of mismatches in DNA. It is required for dam-dependent methyl-directed DNA mismatch repair. May act as a 'molecular matchmaker', a protein that promotes the formation of a stable complex between two or more DNA-binding proteins in an ATP-dependent manner without itself being part of a final effector complex. In Coxiella burnetii (strain Dugway 5J108-111), this protein is DNA mismatch repair protein MutL.